We begin with the raw amino-acid sequence, 142 residues long: 3-hydroxyacyl-[acyl-carrier-protein] dehydratase FabZ (142 aa).

His49 is an active-site residue.

This sequence belongs to the thioester dehydratase family. FabZ subfamily.

It is found in the cytoplasm. The enzyme catalyses a (3R)-hydroxyacyl-[ACP] = a (2E)-enoyl-[ACP] + H2O. In terms of biological role, involved in unsaturated fatty acids biosynthesis. Catalyzes the dehydration of short chain beta-hydroxyacyl-ACPs and long chain saturated and unsaturated beta-hydroxyacyl-ACPs. In Clostridium novyi (strain NT), this protein is 3-hydroxyacyl-[acyl-carrier-protein] dehydratase FabZ.